We begin with the raw amino-acid sequence, 985 residues long: Alanine--tRNA ligase, mitochondrial (985 aa).

A mitochondrion-targeting transit peptide spans 1–23; that stretch reads MAASVAAAAGRLRRAIGRSCPWQ. ATP is bound by residues Arg105, His123, Trp205, and 235 to 237; that span reads LWN. The L-alanine site is built by Asn237 and Asp260. Gly264 serves as a coordination point for ATP. Residues His632, His636, Cys749, and His753 each contribute to the Zn(2+) site.

The protein belongs to the class-II aminoacyl-tRNA synthetase family. As to quaternary structure, monomer. Requires Zn(2+) as cofactor.

It is found in the mitochondrion. The catalysed reaction is tRNA(Ala) + L-alanine + ATP = L-alanyl-tRNA(Ala) + AMP + diphosphate. It carries out the reaction (S)-lactate + ATP + H(+) = (S)-lactoyl-AMP + diphosphate. It catalyses the reaction (S)-lactoyl-AMP + L-lysyl-[protein] = N(6)-[(S)-lactoyl]-L-lysyl-[protein] + AMP + 2 H(+). Functionally, catalyzes the attachment of alanine to tRNA(Ala) in a two-step reaction: alanine is first activated by ATP to form Ala-AMP and then transferred to the acceptor end of tRNA(Ala). Also edits incorrectly charged tRNA(Ala) via its editing domain. In presence of high levels of lactate, also acts as a protein lactyltransferase that mediates lactylation of lysine residues in target proteins, such as CGAS. Acts as an inhibitor of cGAS/STING signaling by catalyzing lactylation of CGAS, preventing the formation of liquid-like droplets in which CGAS is activated. The polypeptide is Alanine--tRNA ligase, mitochondrial (Aars2) (Rattus norvegicus (Rat)).